Reading from the N-terminus, the 850-residue chain is Pierisin (850 aa).

3 consecutive Ricin B-type lectin domains span residues 267–409 (GEFM…WNII), 413–560 (FRPI…WDIK), and 564–707 (YQYV…WYLK).

Belongs to the pierisin ADP-ribosyltransferase family.

It catalyses the reaction a 2'-deoxyguanosine in DNA + NAD(+) = an N(2)-(ADP-L-ribosyl)-2'-deoxyguanosine in DNA + nicotinamide + H(+). ADP-ribosylates double-stranded DNA by targeting the N2 amino group of dG residues. Induces apoptosis in a range of human cell lines. May play a role in destroying cells during pupation and/or defense against parasites. The polypeptide is Pierisin (Pieris brassicae (White butterfly)).